Consider the following 271-residue polypeptide: Glutamate 5-kinase (271 aa).

Residue Lys14 participates in ATP binding. Residues Ser54, Asp141, and Asn157 each coordinate substrate. ATP is bound by residues 177 to 178 and 219 to 225; these read SD and TGGMSSK.

This sequence belongs to the glutamate 5-kinase family.

It is found in the cytoplasm. It carries out the reaction L-glutamate + ATP = L-glutamyl 5-phosphate + ADP. It participates in amino-acid biosynthesis; L-proline biosynthesis; L-glutamate 5-semialdehyde from L-glutamate: step 1/2. In terms of biological role, catalyzes the transfer of a phosphate group to glutamate to form L-glutamate 5-phosphate. This is Glutamate 5-kinase from Enterococcus faecalis (strain ATCC 700802 / V583).